A 212-amino-acid polypeptide reads, in one-letter code: Ribonuclease HII (212 aa).

An RNase H type-2 domain is found at 28-212 (SIIAGVDEVG…KSFAPIRQVV (185 aa)). The a divalent metal cation site is built by Asp-34, Glu-35, and Asp-127.

It belongs to the RNase HII family. Requires Mn(2+) as cofactor. Mg(2+) serves as cofactor.

The protein resides in the cytoplasm. It carries out the reaction Endonucleolytic cleavage to 5'-phosphomonoester.. Endonuclease that specifically degrades the RNA of RNA-DNA hybrids. The chain is Ribonuclease HII from Chlamydia caviae (strain ATCC VR-813 / DSM 19441 / 03DC25 / GPIC) (Chlamydophila caviae).